The chain runs to 440 residues: Xylose isomerase (440 aa).

Catalysis depends on residues His101 and Asp104. Mg(2+)-binding residues include Glu232, Glu268, His271, Asp296, Asp307, Asp309, and Asp339.

The protein belongs to the xylose isomerase family. As to quaternary structure, homotetramer. Requires Mg(2+) as cofactor.

It localises to the cytoplasm. It catalyses the reaction alpha-D-xylose = alpha-D-xylulofuranose. This Salmonella typhi protein is Xylose isomerase.